We begin with the raw amino-acid sequence, 199 residues long: Recombination protein RecR (199 aa).

Residues 56–71 form a C4-type zinc finger; it reads CSICFNVSQDDQCRIC. Residues 79–174 form the Toprim domain; that stretch reads SVLCVVEEYK…RVTRLASGLP (96 aa).

It belongs to the RecR family.

Functionally, may play a role in DNA repair. It seems to be involved in an RecBC-independent recombinational process of DNA repair. It may act with RecF and RecO. In Nocardioides sp. (strain ATCC BAA-499 / JS614), this protein is Recombination protein RecR.